Consider the following 529-residue polypeptide: Peptide chain release factor 3 (529 aa).

One can recognise a tr-type G domain in the interval 11–280 (AKRRTFAIIS…GLVEWAPAPM (270 aa)). GTP contacts are provided by residues 20 to 27 (SHPDAGKT), 88 to 92 (DTPGH), and 142 to 145 (NKLD).

The protein belongs to the TRAFAC class translation factor GTPase superfamily. Classic translation factor GTPase family. PrfC subfamily.

The protein localises to the cytoplasm. Its function is as follows. Increases the formation of ribosomal termination complexes and stimulates activities of RF-1 and RF-2. It binds guanine nucleotides and has strong preference for UGA stop codons. It may interact directly with the ribosome. The stimulation of RF-1 and RF-2 is significantly reduced by GTP and GDP, but not by GMP. The sequence is that of Peptide chain release factor 3 from Yersinia pestis bv. Antiqua (strain Antiqua).